A 554-amino-acid chain; its full sequence is Terpene synthase 17 (554 aa).

The Mg(2+) site is built by aspartate 306, aspartate 310, and glutamate 458. Residues 306–310 (DDTYD) carry the DDXXD motif motif.

The protein belongs to the terpene synthase family. Tpsa subfamily. Mg(2+) is required as a cofactor. It depends on Mn(2+) as a cofactor. As to expression, mostly expressed in stem and trichomes, to a lower extent in leaves, flowers and roots and, at low levels, in fruits.

It catalyses the reaction (2Z,6Z)-farnesyl diphosphate = beta-bisabolene + diphosphate. The enzyme catalyses (2E,6E)-farnesyl diphosphate = (+)-valencene + diphosphate. It carries out the reaction (2E,6E)-farnesyl diphosphate = (E)-beta-farnesene + diphosphate. The catalysed reaction is (2E,6E)-farnesyl diphosphate = gamma-gurjunene + diphosphate. It catalyses the reaction (2Z,6Z)-farnesyl diphosphate = (E)-gamma-bisabolene + diphosphate. The enzyme catalyses (2E)-geranyl diphosphate = limonene + diphosphate. It carries out the reaction (2E)-geranyl diphosphate = beta-myrcene + diphosphate. The catalysed reaction is (2E)-geranyl diphosphate = (E)-beta-ocimene + diphosphate. It catalyses the reaction (2E)-geranyl diphosphate = terpinolene + diphosphate. The enzyme catalyses (2E)-geranyl diphosphate = gamma-terpinene + diphosphate. It carries out the reaction (2Z,6Z)-farnesyl diphosphate = (Z)-gamma-bisabolene + diphosphate. The catalysed reaction is (2E,6E)-farnesyl diphosphate = (1S,5S,6R)-alpha-bergamotene + diphosphate. It catalyses the reaction (2Z,6Z)-farnesyl diphosphate = (1S,5S,6S)-alpha-bergamotene + diphosphate. It participates in secondary metabolite biosynthesis; terpenoid biosynthesis. Sesquiterpene synthase involved in the biosynthesis of volatile compounds. Mediates the conversion of (2E,6E)-farnesyl diphosphate (FPP) into gamma-gurjunene, (E)-beta-farnesene and (+)-valencene, and of (2Z,6Z)-farnesyl diphosphate ((ZZ)-FPP) into (E)-alpha-bergamotene and (Z)-gamma-bisabolene as well as beta-bisabolene, (Z)-alpha-bergamotene and (E)-gamma-bisabolene to a lower extent. Can act with a low efficiency as a monoterpene synthase with geranyl diphosphate (GPP) as substrate, thus producing beta-myrcene, (E)-beta-ocimene, limonene, terpinolene, gamma-terpinene and (Z)-beta-ocimene. This is Terpene synthase 17 from Solanum lycopersicum (Tomato).